We begin with the raw amino-acid sequence, 196 residues long: Pyridoxal 5'-phosphate synthase subunit PdxT (196 aa).

46–48 (GES) contacts L-glutamine. The active-site Nucleophile is Cys-78. L-glutamine contacts are provided by residues Arg-105 and 133 to 134 (IR). Active-site charge relay system residues include His-169 and Glu-171.

Belongs to the glutaminase PdxT/SNO family. In terms of assembly, in the presence of PdxS, forms a dodecamer of heterodimers. Only shows activity in the heterodimer.

The catalysed reaction is aldehydo-D-ribose 5-phosphate + D-glyceraldehyde 3-phosphate + L-glutamine = pyridoxal 5'-phosphate + L-glutamate + phosphate + 3 H2O + H(+). The enzyme catalyses L-glutamine + H2O = L-glutamate + NH4(+). The protein operates within cofactor biosynthesis; pyridoxal 5'-phosphate biosynthesis. Functionally, catalyzes the hydrolysis of glutamine to glutamate and ammonia as part of the biosynthesis of pyridoxal 5'-phosphate. The resulting ammonia molecule is channeled to the active site of PdxS. The polypeptide is Pyridoxal 5'-phosphate synthase subunit PdxT (Geobacillus stearothermophilus (Bacillus stearothermophilus)).